A 309-amino-acid chain; its full sequence is DnaJ homolog subfamily B member 7 (309 aa).

A J domain is found at 3–69 (DYYEVLGLQR…EKRDIYDKYG (67 aa)). The interval 282–309 (FSAGVKEGGKRKKKKRKEVQKKSTKRNC) is disordered. Residues 290-309 (GKRKKKKRKEVQKKSTKRNC) are compositionally biased toward basic residues.

Its function is as follows. Probably acts as a co-chaperone. This Homo sapiens (Human) protein is DnaJ homolog subfamily B member 7 (DNAJB7).